A 303-amino-acid chain; its full sequence is Sulfate adenylyltransferase subunit 2 (303 aa).

The tract at residues 282-303 (SGRLIDHDESGSMEKKKREGYF) is disordered.

This sequence belongs to the PAPS reductase family. CysD subfamily. In terms of assembly, heterodimer composed of CysD, the smaller subunit, and CysN.

It carries out the reaction sulfate + ATP + H(+) = adenosine 5'-phosphosulfate + diphosphate. Its pathway is sulfur metabolism; hydrogen sulfide biosynthesis; sulfite from sulfate: step 1/3. In terms of biological role, with CysN forms the ATP sulfurylase (ATPS) that catalyzes the adenylation of sulfate producing adenosine 5'-phosphosulfate (APS) and diphosphate, the first enzymatic step in sulfur assimilation pathway. APS synthesis involves the formation of a high-energy phosphoric-sulfuric acid anhydride bond driven by GTP hydrolysis by CysN coupled to ATP hydrolysis by CysD. This Maricaulis maris (strain MCS10) (Caulobacter maris) protein is Sulfate adenylyltransferase subunit 2.